An 87-amino-acid polypeptide reads, in one-letter code: UPF0512 protein B (87 aa).

It belongs to the UPF0512 family.

The protein is UPF0512 protein B of Dictyostelium discoideum (Social amoeba).